A 292-amino-acid chain; its full sequence is ATP-dependent Clp protease proteolytic subunit 4, chloroplastic (292 aa).

Residues 1-65 (MGTLSLSSSL…LRFANASIEM (65 aa)) constitute a chloroplast transit peptide. Serine 66 carries the post-translational modification N-acetylserine. The active-site Nucleophile is serine 158. The active site involves histidine 183.

The protein belongs to the peptidase S14 family. Component of the chloroplastic Clp protease core complex which consist of at least 16 proteins: CLPP4 (3 copies), CLPP5 (3 copies), CLPR4 (2 copies), ClpP1 (1 copy), CLPP6 (1 copy), CLPR2 (1 copy), CLPT1 (1 copy), CLPT2 (1 copy) and 3 copies of CLPP3 and/or CLPR1 and/or CLPR3. Interacts with CHIP. The core complex is organized in two heptameric rings, one containing CLPP3,4,5,6 in a 1:2:3:1 ratio and the other CLPP1 and CLPR1,2,3,4 in a 3:1:1:1:1 ratio. Post-translationally, ubiquitinated by CHIP. As to expression, mostly expressed in leaves. Also detected in stems, and to a lower extent, in roots (at protein level).

Its subcellular location is the plastid. It is found in the chloroplast stroma. It carries out the reaction Hydrolysis of proteins to small peptides in the presence of ATP and magnesium. alpha-casein is the usual test substrate. In the absence of ATP, only oligopeptides shorter than five residues are hydrolyzed (such as succinyl-Leu-Tyr-|-NHMec, and Leu-Tyr-Leu-|-Tyr-Trp, in which cleavage of the -Tyr-|-Leu- and -Tyr-|-Trp bonds also occurs).. Functionally, cleaves peptides in various proteins in a process that requires ATP hydrolysis. Has a chymotrypsin-like activity. Plays a major role in the degradation of misfolded proteins. Essential protein required for chloroplast development and integrity. Essential for Embryogenesis. In Arabidopsis thaliana (Mouse-ear cress), this protein is ATP-dependent Clp protease proteolytic subunit 4, chloroplastic.